The sequence spans 251 residues: Geranylgeranylglyceryl phosphate synthase (251 aa).

Mg(2+)-binding residues include D25 and S54. Residues 173–179, 204–205, and 226–227 each bind sn-glycerol 1-phosphate; these read YLEAGSG, GG, and GT.

Belongs to the GGGP/HepGP synthase family. Group II subfamily. Mg(2+) is required as a cofactor.

The protein resides in the cytoplasm. The catalysed reaction is sn-glycerol 1-phosphate + (2E,6E,10E)-geranylgeranyl diphosphate = sn-3-O-(geranylgeranyl)glycerol 1-phosphate + diphosphate. It functions in the pathway membrane lipid metabolism; glycerophospholipid metabolism. Its function is as follows. Prenyltransferase that catalyzes the transfer of the geranylgeranyl moiety of geranylgeranyl diphosphate (GGPP) to the C3 hydroxyl of sn-glycerol-1-phosphate (G1P). This reaction is the first ether-bond-formation step in the biosynthesis of archaeal membrane lipids. This chain is Geranylgeranylglyceryl phosphate synthase, found in Pyrococcus furiosus (strain ATCC 43587 / DSM 3638 / JCM 8422 / Vc1).